The primary structure comprises 247 residues: 6-carboxyhexanoate--CoA ligase (247 aa).

This sequence belongs to the BioW family. As to quaternary structure, homodimer. Mg(2+) serves as cofactor.

It carries out the reaction heptanedioate + ATP + CoA = 6-carboxyhexanoyl-CoA + AMP + diphosphate. Its pathway is metabolic intermediate metabolism; pimeloyl-CoA biosynthesis; pimeloyl-CoA from pimelate: step 1/1. Catalyzes the transformation of pimelate into pimeloyl-CoA with concomitant hydrolysis of ATP to AMP. The chain is 6-carboxyhexanoate--CoA ligase from Persephonella marina (strain DSM 14350 / EX-H1).